The following is a 187-amino-acid chain: Elongation factor P (187 aa).

Belongs to the elongation factor P family.

The protein localises to the cytoplasm. It participates in protein biosynthesis; polypeptide chain elongation. Its function is as follows. Involved in peptide bond synthesis. Stimulates efficient translation and peptide-bond synthesis on native or reconstituted 70S ribosomes in vitro. Probably functions indirectly by altering the affinity of the ribosome for aminoacyl-tRNA, thus increasing their reactivity as acceptors for peptidyl transferase. This chain is Elongation factor P, found in Helicobacter pylori (strain G27).